A 464-amino-acid chain; its full sequence is ATP synthase subunit beta (464 aa).

Position 148–155 (148–155 (GGAGVGKT)) interacts with ATP.

It belongs to the ATPase alpha/beta chains family. In terms of assembly, F-type ATPases have 2 components, CF(1) - the catalytic core - and CF(0) - the membrane proton channel. CF(1) has five subunits: alpha(3), beta(3), gamma(1), delta(1), epsilon(1). CF(0) has three main subunits: a(1), b(2) and c(9-12). The alpha and beta chains form an alternating ring which encloses part of the gamma chain. CF(1) is attached to CF(0) by a central stalk formed by the gamma and epsilon chains, while a peripheral stalk is formed by the delta and b chains.

The protein resides in the cell inner membrane. The enzyme catalyses ATP + H2O + 4 H(+)(in) = ADP + phosphate + 5 H(+)(out). Its function is as follows. Produces ATP from ADP in the presence of a proton gradient across the membrane. The catalytic sites are hosted primarily by the beta subunits. The protein is ATP synthase subunit beta of Acinetobacter baumannii (strain AB0057).